The following is a 507-amino-acid chain: Maturase K (507 aa).

It belongs to the intron maturase 2 family. MatK subfamily.

The protein resides in the plastid. It is found in the chloroplast. Its function is as follows. Usually encoded in the trnK tRNA gene intron. Probably assists in splicing its own and other chloroplast group II introns. The polypeptide is Maturase K (Ranunculus repens (Creeping buttercup)).